The sequence spans 147 residues: HTH-type transcriptional regulator HmrR (147 aa).

Residues 1-69 (MNIGEASKVS…VEQIKELLAL (69 aa)) enclose the HTH merR-type domain. Positions 4 to 23 (GEASKVSGVSSKMIRYYEQI) form a DNA-binding region, H-T-H motif.

Homodimer.

The protein resides in the cytoplasm. Regulates the transcription of actP. It detects cytoplasmic copper stress and activates transcription in response to increasing copper concentrations. In the absence of copper, it negatively regulates the transcription of actP. This Sinorhizobium medicae (strain WSM419) (Ensifer medicae) protein is HTH-type transcriptional regulator HmrR (hmrR).